Consider the following 295-residue polypeptide: HTH-type transcriptional regulator TdfR (295 aa).

The HTH lysR-type domain occupies 1-58; sequence MEFRQLRYFVAAAEEGNVGAAARRLHISQPPVTRQIHALEQHLGVLLFERSARGVQLT. Residues 18–37 constitute a DNA-binding region (H-T-H motif); it reads VGAAARRLHISQPPVTRQIH.

Belongs to the LysR transcriptional regulatory family.

It is found in the cytoplasm. Its function is as follows. Involved in the regulation of 3-chlorocatechol degradation. Transcriptional regulator of tfdB expression. Acts as a repressor in the absence of its effector (either 2-cis-chlorodiene lactone or chloromaleylacetate) but acts as an activator when its effector is present. This Cupriavidus pinatubonensis (strain JMP 134 / LMG 1197) (Cupriavidus necator (strain JMP 134)) protein is HTH-type transcriptional regulator TdfR (tfdR).